Reading from the N-terminus, the 228-residue chain is Urease accessory protein UreF (228 aa).

The protein belongs to the UreF family. In terms of assembly, ureD, UreF and UreG form a complex that acts as a GTP-hydrolysis-dependent molecular chaperone, activating the urease apoprotein by helping to assemble the nickel containing metallocenter of UreC. The UreE protein probably delivers the nickel.

The protein localises to the cytoplasm. Required for maturation of urease via the functional incorporation of the urease nickel metallocenter. The sequence is that of Urease accessory protein UreF from Dechloromonas aromatica (strain RCB).